The primary structure comprises 281 residues: Nucleotide-binding protein MADE_1004170 (281 aa).

8 to 15 serves as a coordination point for ATP; that stretch reads GRSGSGKS. 56-59 is a GTP binding site; sequence DVRN.

The protein belongs to the RapZ-like family.

Displays ATPase and GTPase activities. The chain is Nucleotide-binding protein MADE_1004170 from Alteromonas mediterranea (strain DSM 17117 / CIP 110805 / LMG 28347 / Deep ecotype).